We begin with the raw amino-acid sequence, 367 residues long: DNA replication and repair protein RecF (367 aa).

30–37 (GNNGEGKT) is an ATP binding site.

Belongs to the RecF family.

The protein localises to the cytoplasm. Functionally, the RecF protein is involved in DNA metabolism; it is required for DNA replication and normal SOS inducibility. RecF binds preferentially to single-stranded, linear DNA. It also seems to bind ATP. The sequence is that of DNA replication and repair protein RecF from Leptospira biflexa serovar Patoc (strain Patoc 1 / Ames).